Consider the following 154-residue polypeptide: Transcriptional repressor NrdR (154 aa).

A zinc finger lies at 3–34; sequence CPYCRHPDSRVVDSREADDGQLIRRRRSCPEC. The 91-residue stretch at 46–136 folds into the ATP-cone domain; it reads LAVVKRSGVT…VYRSFESLAD (91 aa).

The protein belongs to the NrdR family. Zn(2+) serves as cofactor.

In terms of biological role, negatively regulates transcription of bacterial ribonucleotide reductase nrd genes and operons by binding to NrdR-boxes. The chain is Transcriptional repressor NrdR from Salinispora arenicola (strain CNS-205).